The primary structure comprises 180 residues: Der GTPase-activating protein YihI (180 aa).

Residues 1-10 (MKQPARTSQV) show a composition bias toward polar residues. 2 disordered regions span residues 1–102 (MKQP…PRLT) and 158–180 (DAED…RTPE). A compositionally biased stretch (basic and acidic residues) spans 21–32 (TREEINQEARDR). Polar residues predominate over residues 45–54 (SRANPATVSQ). Over residues 55–67 (KGDKSQSVKDPRI) the composition is skewed to basic and acidic residues. Residues 84–93 (PANPVKAAKP) show a composition bias toward low complexity.

This sequence belongs to the YihI family. As to quaternary structure, interacts with Der.

A GTPase-activating protein (GAP) that modifies Der/EngA GTPase function. May play a role in ribosome biogenesis. The chain is Der GTPase-activating protein YihI from Erwinia tasmaniensis (strain DSM 17950 / CFBP 7177 / CIP 109463 / NCPPB 4357 / Et1/99).